We begin with the raw amino-acid sequence, 132 residues long: Small ribosomal subunit protein uS8 (132 aa).

The protein belongs to the universal ribosomal protein uS8 family. In terms of assembly, part of the 30S ribosomal subunit. Contacts proteins S5 and S12.

In terms of biological role, one of the primary rRNA binding proteins, it binds directly to 16S rRNA central domain where it helps coordinate assembly of the platform of the 30S subunit. The sequence is that of Small ribosomal subunit protein uS8 from Christiangramia forsetii (strain DSM 17595 / CGMCC 1.15422 / KT0803) (Gramella forsetii).